Here is a 227-residue protein sequence, read N- to C-terminus: MICOS complex subunit MIC19 (227 aa).

A lipid anchor (N-myristoyl glycine) is attached at G2. At S29 the chain carries Phosphoserine. A disordered region spans residues 34 to 60; it reads DRMKETSPSGPKSQRYSGTYGASVSDE. Residues 39–55 are compositionally biased toward polar residues; it reads TSPSGPKSQRYSGTYGA. At Y49 the chain carries Phosphotyrosine. Phosphoserine is present on residues S50, S56, and S58. K142 is subject to N6-acetyllysine. The CHCH domain maps to 180-222; that stretch reads HPVCADLQAQILQCYRQNTQQTLSCSALASQYMRCVNQAKQST. 2 short sequence motifs (cx9C motif) span residues 183 to 193 and 204 to 214; these read CADLQAQILQC and CSALASQYMRC. 2 disulfides stabilise this stretch: C183–C214 and C193–C204.

This sequence belongs to the MICOS complex subunit Mic19 family. Metazoan Mic19 subfamily. As to quaternary structure, component of the mitochondrial contact site and cristae organizing system (MICOS) complex, composed of at least MICOS10/MIC10, CHCHD3/MIC19, CHCHD6/MIC25, APOOL/MIC27, IMMT/MIC60, APOO/MIC23/MIC26 and MICOS13/MIC13. This complex was also known under the names MINOS or MitOS complex. The MICOS complex associates with mitochondrial outer membrane proteins SAMM50, MTX1 and MTX2 (together described as components of the mitochondrial outer membrane sorting assembly machinery (SAM) complex) and DNAJC11, mitochondrial inner membrane protein TMEM11 and with HSPA9. The MICOS and SAM complexes together with DNAJC11 are part of a large protein complex spanning both membranes termed the mitochondrial intermembrane space bridging (MIB) complex. Interacts with HSPA1A/HSPA1B and OPA1, preferentially with the soluble OPA1 form. Interacts with IMMT/MIC60.

The protein resides in the mitochondrion inner membrane. The protein localises to the cytoplasm. It localises to the nucleus. Its subcellular location is the mitochondrion. Functionally, component of the MICOS complex, a large protein complex of the mitochondrial inner membrane that plays crucial roles in the maintenance of crista junctions, inner membrane architecture, and formation of contact sites to the outer membrane. Has also been shown to function as a transcription factor which binds to the BAG1 promoter and represses BAG1 transcription. Plays an important role in the maintenance of the MICOS complex stability and the mitochondrial cristae morphology. This Bos taurus (Bovine) protein is MICOS complex subunit MIC19 (CHCHD3).